Consider the following 221-residue polypeptide: Probable septum site-determining protein MinC (221 aa).

Belongs to the MinC family. As to quaternary structure, interacts with MinD and FtsZ.

Functionally, cell division inhibitor that blocks the formation of polar Z ring septums. Rapidly oscillates between the poles of the cell to destabilize FtsZ filaments that have formed before they mature into polar Z rings. Prevents FtsZ polymerization. This is Probable septum site-determining protein MinC from Aliivibrio fischeri (strain ATCC 700601 / ES114) (Vibrio fischeri).